Here is a 425-residue protein sequence, read N- to C-terminus: Adenylosuccinate synthetase (425 aa).

Residues 12–18 (GDEGKGK) and 40–42 (GHT) each bind GTP. Residue D13 is the Proton acceptor of the active site. 2 residues coordinate Mg(2+): D13 and G40. Residues 13–16 (DEGK), 38–41 (NAGH), T126, R140, Q221, T236, and R300 each bind IMP. The active-site Proton donor is the H41. 296–302 (ATTGRPR) is a binding site for substrate. Residues R302, 328–330 (KLD), and 410–412 (STG) each bind GTP.

It belongs to the adenylosuccinate synthetase family. Homodimer. Mg(2+) serves as cofactor.

The protein resides in the cytoplasm. It carries out the reaction IMP + L-aspartate + GTP = N(6)-(1,2-dicarboxyethyl)-AMP + GDP + phosphate + 2 H(+). The protein operates within purine metabolism; AMP biosynthesis via de novo pathway; AMP from IMP: step 1/2. Functionally, plays an important role in the de novo pathway of purine nucleotide biosynthesis. Catalyzes the first committed step in the biosynthesis of AMP from IMP. The polypeptide is Adenylosuccinate synthetase (Thermodesulfovibrio yellowstonii (strain ATCC 51303 / DSM 11347 / YP87)).